Consider the following 155-residue polypeptide: Ribosomal RNA large subunit methyltransferase H (155 aa).

Residues Leu72, Gly103, and 122-127 (LSPLTL) each bind S-adenosyl-L-methionine.

The protein belongs to the RNA methyltransferase RlmH family. Homodimer.

The protein localises to the cytoplasm. The catalysed reaction is pseudouridine(1915) in 23S rRNA + S-adenosyl-L-methionine = N(3)-methylpseudouridine(1915) in 23S rRNA + S-adenosyl-L-homocysteine + H(+). Specifically methylates the pseudouridine at position 1915 (m3Psi1915) in 23S rRNA. The polypeptide is Ribosomal RNA large subunit methyltransferase H (Haemophilus influenzae (strain PittGG)).